A 189-amino-acid polypeptide reads, in one-letter code: Interferon alpha-6 (189 aa).

The first 20 residues, 1-20, serve as a signal peptide directing secretion; it reads MALPFALLMALVVLSCKSSC. Cystine bridges form between Cys24/Cys122 and Cys52/Cys162.

The protein belongs to the alpha/beta interferon family.

The protein localises to the secreted. Produced by macrophages, IFN-alpha have antiviral activities. Interferon stimulates the production of two enzymes: a protein kinase and an oligoadenylate synthetase. The chain is Interferon alpha-6 (IFNA6) from Homo sapiens (Human).